The following is a 2748-amino-acid chain: MSRPELIPDILIRHAGESCEKVAFAGPGWTITYGDLEKRTRRLAAHLVHAGIGRGDFVAIVLGRCLQTVESVLAITRAGAVGVPLDSRSPSSELAKVLEHSGARVIITDGRYLTTVRTAAAEGSLIILSTEEIPKMDAIEGKHQIARYQDWIEDAEYSTLDIQIDNLREDEQAFLHYTSGTTSLPKGVLSNQRSWLLNVNSLVSAFELTPEDRFFWPLPLFHCIGHLLCIMGTVVVGASAYLPDADQTLFDSLRDTNAQETTLIVGAPTTFHDLMDAAKRSDPTSPLFLPRLRACMYAGSSASGSLGAQIKEYLGVPLLNNYGCTEGCGSIAVSRTGHTYRHNSSISLLPHWEIKLVDPDGHPVQDGEQGEVCIGGPGLMLEYYRETRTPFTPDGWYPTGDIAIRSSSAAGAELTLVGRRKEIIIRGGENIHPHELEHVLLRHPGVADVVVAGMPHRLLGETPAAFIVKSVANMDFDLSALLAACREVLPDYKIPTAFYEIDTVPRTVIGKPKRLTMTAYTNKPLTARSMLQSRDLIEALVMAETVSACTIDAGPESESNTDWLRRHFDQPFSFLGLSSMAGVVLRDRLAGLTGLDDLPNTLVFDYSTPAAVSTYLHGRLLGPKTAPLPSSTPTTKADSEVEPIAIVSMACRYPGGISSPEDLWQLVSDEIDATTDFPDDRGWDVESLYSTDPDTPNTSTTKRGGFLPDFARFDAGLFGMAPREALATDPQQRLLLETTWELAERGGIAPLSLQGSQTGVFVGTLYEDYEENGFGNDELEAHLGLGSSSSVVSGRVSYCFGLHGPSLVVSTGCSSSLVAIHLAAQSLRNRECSLTIAGGITTMATPRPFTMFSRRRGLSSDGRCRAYSSDASGTGWSEGVGLLLLERLSDAKRNGHQILGLIRGSAVNSDGKSNGLTAPNGPAQQMCIQSALAQAGMSPENVDVLEGHGTATPLGDPIEVQAVISAYGNGDRKNIDSARRSESLLLGSIKSNIGHTQAAAAVAGIIKMVQAMRHGVAPASLHIREPSPQIDWEGSGVELLSKARQWPSVNRPRRAAVSSFGIGGTNSHIILEQPEPVQMQDSTSKRISAAFPWLISGASEVALRAQAHSLLTAWREADSNTFSPLRNQEPADIAFSLATARSALKYRATVTYALGANMHNQIETTLERLAQGEPHPDVMTAHTNTTGNKPRLACLFSGQGSWMPTIDTLEELRATFPVFSAAFQAACDEVDMHLECPLVHAITDGSMLDRTDFAQATLFVFEVAMFRLLESFGIRPDFVAGHSLGEIAAAHAAGALSLRDAATIVTTRAKLMASLPPNGGMVSIAATEAEVAIELSQFDGIASIAAVNSQTSVVVSGTQEAIQAVADRFTSLGRRATVLRNVKHGFHSQLMDHILPGLENALPSSMESENPTTIPLVSTVTGKRAAAAQLRSSNHWIRHVSEPVRFADAVNELRSKEHVSVFVEIGPSAVLSPHVPDAAATHGTVDKLLGMLGQLWARGVPVDWQAVFDGSGARFVDLPVYAFQRQRYWLPYTPLLPVTSMGAVTEQAQERTSGVFGGSRLGHEMIFNATSIPGTGTIICSGYLSTARQLWLRDHIIGGQSLVPASAFTELALRAAQECAERSEISSLILDEMIVIASLDLSSAEDEEQGEPGEVEIQVLIGESQPEDAATQNQRTVDVYSRPRGVATQHEWTQHATGTFQLISQPNPSQESFINGTDPTKAESDVNISEAYAVLSGAGLTYGPSFQGVRAIWRLHDNDLLVQIDPPQDQSQMSTSILHPAVLDAALHASTLASAEKVASGDIRLPFSFRGIQVFEAVGASSPILARIHHIGENSFSMTMTDHSSGVVLAKISEVQLRTWQPTVAGGDLYRLEWIDFASKPTTSTTTDKIVRFESSHDVDATAVSKAVHEGLAEALHAVHEWRADKSPAADEVRLVFVTERATSTGGNSDIDLVAAAVWGFVRSAQAEFGGARVALIDLDGSSESEEALTAALVSREEIVAVHGGKTMIPRLGKQPSVTEPPQAMSLDVSGTVLITGGTGGLGAMLSRDIVHAHGAKSLLLVSRSGIEATGARELYDELRSANAAVRVEACDVSDRAQLAALLDNHNHHQYPPITTVIHCAGVVSDAFLGSQTPERVSSVLRPKVDAAWNLHDLVPDTVRSFVLFSSYVSVLGNEGQAAYSAGNAFLDALARFRVARGLPALSLAWGPWANDAGMAAGSKLDAIPPRIANARPFTDQQGLSLLYRALHMQATNPSEPVLLPLLLRGPFPLVPSAGPAYKTKTNAKRESGSSAVWRRNIAAVPSENRHDTLLGLVRDEIAAVLGYQGQDMLPDQRLDDLGFDSFTSVMLTNRLRVLTGLSYLPVTLALDYDTTTALVEYLLPRIEAEPQPEVDTDSDASTTAGDTSVSRDSGKEDELSPSSSVTTLALEEQDDLNPEIFRGLATIHRRLSQLEQYTAAADLLASAALAMPTFPKTGTVLSSYAAEPQRLATGPSASSNSELPLPLVFIAPFFPRIKIEGVGLSVYSNLASAMNGKRDVFELPHPEAQAVPSDLGTLADLHVHTIRKHFSDRPGIILAGYSAGGTVAYAVASKLANAESEQPRLAGFVLVDTYLTMTGRGDPDWLNALPAEALVSRLQVPPSLGHPKGMGSDSLVGDLDVALAKVGGYFRALRDWDIGLHPLPDALSTLFVRAVDPSDKMPKDTDVWRPRWPRADLTVDVPGSHLALLDKRYAPGAAGEIERWAREDLNA.

The segment at 13–511 (RHAGESCEKV…DTVPRTVIGK (499 aa)) is adenylation (A) domain. The Carrier 1 domain occupies 535–620 (DLIEALVMAE…AVSTYLHGRL (86 aa)). Ser579 bears the O-(pantetheine 4'-phosphoryl)serine mark. Residues 641-1073 (VEPIAIVSMA…GTNSHIILEQ (433 aa)) enclose the Ketosynthase family 3 (KS3) domain. Active-site for beta-ketoacyl synthase activity residues include Cys813, His948, and His995. Residues 1196–1489 (FSGQGSWMPT…ATHGTVDKLL (294 aa)) form the Malonyl-CoA:ACP transacylase (MAT) domain. The tract at residues 1561-1842 (LGHEMIFNAT…ENSFSMTMTD (282 aa)) is dehydratase (DH) domain. Positions 1563–1707 (HEMIFNATSI…GTFQLISQPN (145 aa)) are N-terminal hotdog fold. A PKS/mFAS DH domain is found at 1563 to 1866 (HEMIFNATSI…LRTWQPTVAG (304 aa)). Residue His1595 is the Proton acceptor; for dehydratase activity of the active site. Residues 1722 to 1866 (AESDVNISEA…LRTWQPTVAG (145 aa)) form a C-terminal hotdog fold region. Asp1784 functions as the Proton donor; for dehydratase activity in the catalytic mechanism. The 180-residue stretch at 2031-2210 (GTVLITGGTG…ALSLAWGPWA (180 aa)) folds into the Ketoreductase (KR) domain. Positions 2305–2383 (NRHDTLLGLV…ALVEYLLPRI (79 aa)) constitute a Carrier 2 domain. Ser2342 carries the O-(pantetheine 4'-phosphoryl)serine modification. The tract at residues 2386–2426 (EPQPEVDTDSDASTTAGDTSVSRDSGKEDELSPSSSVTTLA) is disordered. Residues 2396 to 2407 (DASTTAGDTSVS) show a composition bias toward low complexity. A thioester reductase (TE) domain region spans residues 2519 to 2742 (VGLSVYSNLA…GAAGEIERWA (224 aa)).

The protein in the N-terminal section; belongs to the NRP synthetase family. The cofactor is pantetheine 4'-phosphate.

It participates in secondary metabolite biosynthesis; flavonoid biosynthesis. In terms of biological role, hybrid PKS-NRPS synthetase; part of the gene cluster that mediates the biosynthesis of chlorflavonin, a fungal flavonoid with acetolactate synthase inhibitory activity. Within the pathway, the PKS-NRPS cfoA, is responsible for the generation of the key precursor chalcone. The adenylation (A) domain activates benzoic acid or p-hydroxybenzoic acid which are transferred to the thiol group of the pantetheinyl residue of the T domain, and further transferred to the adjacent PKS portion of cfoA. Within the PKS portion of cfoA, benzoic acid or p-hydroxybenzoic acid act as starter units for respectively four malonyl-CoA molecules for elongation by the AT and KS domains. Afterwards, chalcone is cyclized through Claisen condensation and thereby released either spontaneously or catalyzed by the TE domain. Then, a new type of chalcone isomerase, cfoK, catalyzes the conversion of the chalcone into a flavanone by a histidine-mediated oxa-Michael addition mechanism. The desaturation of flavanone to flavone is catalyzed by a new type of flavone synthase, the flavin mononucleotide (FMN)-dependent oxidoreductase cfoJ. Monooxygenases cfoF, cfoG, and P450 cfoH are responsible for the hydroxylation of the flavonoid skeleton at sites C3, C8, and C2', respectively. Like cfoF, the dehydratase cfoI plays also a role in the hydroxylation of position C3. Methyltransferases cfoB, cfoC, and cfoD then catalyze the methylation of C7-OH, C8-OH, and C3-OH, respectively. Finally, the monooxygenase cfoE is responsible for the chlorination of flavonoid at position C3'. The chain is Chalcone synthase cfoA from Aspergillus candidus.